We begin with the raw amino-acid sequence, 1413 residues long: DNA-directed RNA polymerase subunit beta' (1413 aa).

Positions 72, 74, 87, and 90 each coordinate Zn(2+). Residues D463, D465, and D467 each contribute to the Mg(2+) site. Zn(2+) is bound by residues C811, C885, C892, and C895.

Belongs to the RNA polymerase beta' chain family. The RNAP catalytic core consists of 2 alpha, 1 beta, 1 beta' and 1 omega subunit. When a sigma factor is associated with the core the holoenzyme is formed, which can initiate transcription. It depends on Mg(2+) as a cofactor. The cofactor is Zn(2+).

The catalysed reaction is RNA(n) + a ribonucleoside 5'-triphosphate = RNA(n+1) + diphosphate. In terms of biological role, DNA-dependent RNA polymerase catalyzes the transcription of DNA into RNA using the four ribonucleoside triphosphates as substrates. This is DNA-directed RNA polymerase subunit beta' from Ruegeria pomeroyi (strain ATCC 700808 / DSM 15171 / DSS-3) (Silicibacter pomeroyi).